The primary structure comprises 238 residues: 1-(5-phosphoribosyl)-5-[(5-phosphoribosylamino)methylideneamino] imidazole-4-carboxamide isomerase (238 aa).

The active-site Proton acceptor is the aspartate 8. The Proton donor role is filled by aspartate 129.

This sequence belongs to the HisA/HisF family.

It localises to the cytoplasm. It carries out the reaction 1-(5-phospho-beta-D-ribosyl)-5-[(5-phospho-beta-D-ribosylamino)methylideneamino]imidazole-4-carboxamide = 5-[(5-phospho-1-deoxy-D-ribulos-1-ylimino)methylamino]-1-(5-phospho-beta-D-ribosyl)imidazole-4-carboxamide. It functions in the pathway amino-acid biosynthesis; L-histidine biosynthesis; L-histidine from 5-phospho-alpha-D-ribose 1-diphosphate: step 4/9. This Lacticaseibacillus casei (strain BL23) (Lactobacillus casei) protein is 1-(5-phosphoribosyl)-5-[(5-phosphoribosylamino)methylideneamino] imidazole-4-carboxamide isomerase.